Reading from the N-terminus, the 338-residue chain is Ketol-acid reductoisomerase (NADP(+)) (338 aa).

One can recognise a KARI N-terminal Rossmann domain in the interval 1–181; it reads MKVFYDKDCD…GGGKAGIIET (181 aa). Residues 24–27, Arg-47, and Ser-52 contribute to the NADP(+) site; that span reads YGSQ. Residue His-107 is part of the active site. Gly-133 contacts NADP(+). Residues 182-327 enclose the KARI C-terminal knotted domain; the sequence is NFREETETDL…EKLRAMMPWI (146 aa). Positions 190, 194, 226, and 230 each coordinate Mg(2+). Ser-251 provides a ligand contact to substrate.

It belongs to the ketol-acid reductoisomerase family. It depends on Mg(2+) as a cofactor.

The enzyme catalyses (2R)-2,3-dihydroxy-3-methylbutanoate + NADP(+) = (2S)-2-acetolactate + NADPH + H(+). It carries out the reaction (2R,3R)-2,3-dihydroxy-3-methylpentanoate + NADP(+) = (S)-2-ethyl-2-hydroxy-3-oxobutanoate + NADPH + H(+). Its pathway is amino-acid biosynthesis; L-isoleucine biosynthesis; L-isoleucine from 2-oxobutanoate: step 2/4. It functions in the pathway amino-acid biosynthesis; L-valine biosynthesis; L-valine from pyruvate: step 2/4. In terms of biological role, involved in the biosynthesis of branched-chain amino acids (BCAA). Catalyzes an alkyl-migration followed by a ketol-acid reduction of (S)-2-acetolactate (S2AL) to yield (R)-2,3-dihydroxy-isovalerate. In the isomerase reaction, S2AL is rearranged via a Mg-dependent methyl migration to produce 3-hydroxy-3-methyl-2-ketobutyrate (HMKB). In the reductase reaction, this 2-ketoacid undergoes a metal-dependent reduction by NADPH to yield (R)-2,3-dihydroxy-isovalerate. The protein is Ketol-acid reductoisomerase (NADP(+)) of Polaromonas sp. (strain JS666 / ATCC BAA-500).